The primary structure comprises 342 residues: Transmembrane protein 268 (342 aa).

Residues 1-30 (MACEPQVDPGATGPLPPSSPGWSALPGGSP) form a disordered region. 2 helical membrane passes run 105–125 (AFAV…SQMF) and 132–152 (AGML…VLVF).

Interacts with ITGAM; this interaction inhibits ITGAM degradation via the endosome-lysosome pathway. Interacts with ITGB4; this interaction prevents ITGB4 degradation.

The protein localises to the cell membrane. Stabilizes cell surface expression of ITGAM and participates in the adhesion and migration of phagocytes during bacterial clearance. This chain is Transmembrane protein 268, found in Homo sapiens (Human).